Reading from the N-terminus, the 338-residue chain is Mitochondrial glutathione transporter SLC25A40 (338 aa).

Solcar repeat units lie at residues 13-131, 139-223, and 233-327; these read VTPL…LTAL, NESR…LKKW, and PTFM…GKSF. The next 6 helical transmembrane spans lie at 19-39, 103-123, 145-165, 199-220, 239-259, and 298-318; these read MFAS…FDVV, LWSG…IYFT, IVAG…LELI, WAPT…YEVL, FTSG…FDVV, and GLFT…AVMI.

This sequence belongs to the mitochondrial carrier (TC 2.A.29) family.

It localises to the mitochondrion inner membrane. The catalysed reaction is glutathione(in) = glutathione(out). In terms of biological role, probable mitochondrial transporter required for glutathione import into mitochondria. Glutathione, which plays key roles in oxidative metabolism, is produced exclusively in the cytosol and is imported in many organelles. Mitochondrial glutathione is required for the activity and stability of proteins containing iron-sulfur clusters, as well as erythropoiesis. The sequence is that of Mitochondrial glutathione transporter SLC25A40 from Bos taurus (Bovine).